A 427-amino-acid polypeptide reads, in one-letter code: 3-phosphoshikimate 1-carboxyvinyltransferase (427 aa).

3 residues coordinate 3-phosphoshikimate: lysine 20, serine 21, and arginine 25. Lysine 20 provides a ligand contact to phosphoenolpyruvate. Phosphoenolpyruvate contacts are provided by glycine 92 and arginine 120. 3-phosphoshikimate is bound by residues serine 166, glutamine 168, aspartate 312, and lysine 339. Residue glutamine 168 participates in phosphoenolpyruvate binding. Aspartate 312 (proton acceptor) is an active-site residue. Residues arginine 343 and arginine 385 each contribute to the phosphoenolpyruvate site.

This sequence belongs to the EPSP synthase family. As to quaternary structure, monomer.

Its subcellular location is the cytoplasm. The catalysed reaction is 3-phosphoshikimate + phosphoenolpyruvate = 5-O-(1-carboxyvinyl)-3-phosphoshikimate + phosphate. It functions in the pathway metabolic intermediate biosynthesis; chorismate biosynthesis; chorismate from D-erythrose 4-phosphate and phosphoenolpyruvate: step 6/7. Its function is as follows. Catalyzes the transfer of the enolpyruvyl moiety of phosphoenolpyruvate (PEP) to the 5-hydroxyl of shikimate-3-phosphate (S3P) to produce enolpyruvyl shikimate-3-phosphate and inorganic phosphate. The protein is 3-phosphoshikimate 1-carboxyvinyltransferase of Streptococcus pneumoniae serotype 19F (strain G54).